The sequence spans 323 residues: Protein REDOX 2 (323 aa).

Asp53 serves as a coordination point for NADP(+). Tyr58 serves as the catalytic Proton donor. His121 contributes to the substrate binding site. NADP(+)-binding positions include 167 to 168 (SN), Gln189, 215 to 220 (WSPLLS), and 289 to 297 (DQIHEIPQR). The disordered stretch occupies residues 302–323 (GEEFMHPEGPIKSPEELWDGDL).

Belongs to the aldo/keto reductase family. In terms of assembly, monomer. As to expression, expressed in leaf epidermis.

The catalysed reaction is 15alpha-stemmadenine + NADP(+) = 17-dehydrostemmadenine + NADPH + 2 H(+). It functions in the pathway alkaloid biosynthesis. In terms of biological role, component of iboga and aspidosperma monoterpenoid indole alkaloids (MIAs, e.g. tabersonine and catharanthine) biosynthesis pathway from 19E-geissoschizine. Catalyzes the second oxidation step of the unstable intermediate product resulting from the reaction triggered by the geissoschizine oxidase (GO) in the stemmadenine biosynthesis process from 19E-geissoschizine. The polypeptide is Protein REDOX 2 (Catharanthus roseus (Madagascar periwinkle)).